We begin with the raw amino-acid sequence, 430 residues long: Tol-Pal system protein TolB (430 aa).

An N-terminal signal peptide occupies residues 1-26; it reads MSLMTKLGLRALVASCLIAAGGAAHA.

This sequence belongs to the TolB family. The Tol-Pal system is composed of five core proteins: the inner membrane proteins TolA, TolQ and TolR, the periplasmic protein TolB and the outer membrane protein Pal. They form a network linking the inner and outer membranes and the peptidoglycan layer.

Its subcellular location is the periplasm. Part of the Tol-Pal system, which plays a role in outer membrane invagination during cell division and is important for maintaining outer membrane integrity. The chain is Tol-Pal system protein TolB from Paraburkholderia phymatum (strain DSM 17167 / CIP 108236 / LMG 21445 / STM815) (Burkholderia phymatum).